Consider the following 146-residue polypeptide: Cystatin-C (146 aa).

A signal peptide spans M1–G26. S43 is modified (phosphoserine). The short motif at Q81–G85 is the Secondary area of contact element. 2 disulfide bridges follow: C99/C109 and C123/C143.

Belongs to the cystatin family.

Its subcellular location is the secreted. Its function is as follows. As an inhibitor of cysteine proteinases, this protein is thought to serve an important physiological role as a local regulator of this enzyme activity. This is Cystatin-C (CST3) from Saimiri sciureus (Common squirrel monkey).